The chain runs to 475 residues: Argininosuccinate lyase (475 aa).

The protein belongs to the lyase 1 family. Argininosuccinate lyase subfamily.

It is found in the cytoplasm. It carries out the reaction 2-(N(omega)-L-arginino)succinate = fumarate + L-arginine. It participates in amino-acid biosynthesis; L-arginine biosynthesis; L-arginine from L-ornithine and carbamoyl phosphate: step 3/3. The protein is Argininosuccinate lyase of Streptomyces coelicolor (strain ATCC BAA-471 / A3(2) / M145).